We begin with the raw amino-acid sequence, 434 residues long: D-amino acid dehydrogenase (434 aa).

An FAD-binding site is contributed by 3 to 17; sequence VLVLGSGVIGTTSAW.

The protein belongs to the DadA oxidoreductase family. It depends on FAD as a cofactor.

It carries out the reaction a D-alpha-amino acid + A + H2O = a 2-oxocarboxylate + AH2 + NH4(+). The protein operates within amino-acid degradation; D-alanine degradation; NH(3) and pyruvate from D-alanine: step 1/1. Functionally, oxidative deamination of D-amino acids. The sequence is that of D-amino acid dehydrogenase from Stenotrophomonas maltophilia (strain K279a).